The following is a 152-amino-acid chain: UPF0225 protein YchJ (152 aa).

The protein belongs to the UPF0225 family.

In Escherichia coli O17:K52:H18 (strain UMN026 / ExPEC), this protein is UPF0225 protein YchJ.